A 158-amino-acid chain; its full sequence is Phosphopantetheine adenylyltransferase (158 aa).

Threonine 10 lines the substrate pocket. ATP-binding positions include 10–11 (TF) and histidine 18. Residues lysine 42, leucine 74, and arginine 88 each coordinate substrate. Residues 89-91 (GIR), glutamate 99, and 124-130 (WRYLSST) each bind ATP.

Belongs to the bacterial CoaD family. Homohexamer. Mg(2+) serves as cofactor.

Its subcellular location is the cytoplasm. The enzyme catalyses (R)-4'-phosphopantetheine + ATP + H(+) = 3'-dephospho-CoA + diphosphate. It functions in the pathway cofactor biosynthesis; coenzyme A biosynthesis; CoA from (R)-pantothenate: step 4/5. Reversibly transfers an adenylyl group from ATP to 4'-phosphopantetheine, yielding dephospho-CoA (dPCoA) and pyrophosphate. The sequence is that of Phosphopantetheine adenylyltransferase from Actinobacillus pleuropneumoniae serotype 5b (strain L20).